We begin with the raw amino-acid sequence, 241 residues long: MNIFPAIDLINGKCVRLEKGDFNKTTTYELEPKDVAKAYQQAGAEFIHVVDLDGAKKGQTCQFETIQKIRENCNMTLQVGGGVKDFETIEKLLEIGVDRVVIGSLAVKDIALTKKFFEKYGAEKIVLALDVFIKNGVPYIATHGWQESSTTTLDEILQTYLGDGLEYVLCTDISRDGMLQGPNFELYRIYSSIYPDVQFMASGGVGSLEDLEILKEQNTYGVIIGKALYENKFTLQEALEC.

Residue Asp8 is the Proton acceptor of the active site. Asp130 (proton donor) is an active-site residue.

This sequence belongs to the HisA/HisF family.

It is found in the cytoplasm. It carries out the reaction 1-(5-phospho-beta-D-ribosyl)-5-[(5-phospho-beta-D-ribosylamino)methylideneamino]imidazole-4-carboxamide = 5-[(5-phospho-1-deoxy-D-ribulos-1-ylimino)methylamino]-1-(5-phospho-beta-D-ribosyl)imidazole-4-carboxamide. Its pathway is amino-acid biosynthesis; L-histidine biosynthesis; L-histidine from 5-phospho-alpha-D-ribose 1-diphosphate: step 4/9. This is 1-(5-phosphoribosyl)-5-[(5-phosphoribosylamino)methylideneamino] imidazole-4-carboxamide isomerase from Francisella philomiragia subsp. philomiragia (strain ATCC 25017 / CCUG 19701 / FSC 153 / O#319-036).